We begin with the raw amino-acid sequence, 1391 residues long: DNA-directed RNA polymerase subunit beta' (1391 aa).

The Zn(2+) site is built by Cys-72, Cys-74, Cys-87, and Cys-90. 3 residues coordinate Mg(2+): Asp-462, Asp-464, and Asp-466. Zn(2+)-binding residues include Cys-816, Cys-890, Cys-897, and Cys-900.

Belongs to the RNA polymerase beta' chain family. The RNAP catalytic core consists of 2 alpha, 1 beta, 1 beta' and 1 omega subunit. When a sigma factor is associated with the core the holoenzyme is formed, which can initiate transcription. It depends on Mg(2+) as a cofactor. Requires Zn(2+) as cofactor.

It carries out the reaction RNA(n) + a ribonucleoside 5'-triphosphate = RNA(n+1) + diphosphate. Functionally, DNA-dependent RNA polymerase catalyzes the transcription of DNA into RNA using the four ribonucleoside triphosphates as substrates. The polypeptide is DNA-directed RNA polymerase subunit beta' (Neisseria meningitidis serogroup B (strain ATCC BAA-335 / MC58)).